A 395-amino-acid polypeptide reads, in one-letter code: Tyrosine--tRNA ligase 2 (395 aa).

The 'HIGH' region motif lies at 42–51 (PTAPDIHLGH). A 'KMSKS' region motif is present at residues 226-230 (KMSKS). Position 229 (lysine 229) interacts with ATP. An S4 RNA-binding domain is found at 334–394 (TPVANLLKDA…GKRKFARITI (61 aa)).

It belongs to the class-I aminoacyl-tRNA synthetase family. TyrS type 2 subfamily. Homodimer.

It localises to the cytoplasm. The enzyme catalyses tRNA(Tyr) + L-tyrosine + ATP = L-tyrosyl-tRNA(Tyr) + AMP + diphosphate + H(+). Its function is as follows. Catalyzes the attachment of tyrosine to tRNA(Tyr) in a two-step reaction: tyrosine is first activated by ATP to form Tyr-AMP and then transferred to the acceptor end of tRNA(Tyr). The protein is Tyrosine--tRNA ligase 2 of Vibrio parahaemolyticus serotype O3:K6 (strain RIMD 2210633).